The primary structure comprises 863 residues: Alanine--tRNA ligase (863 aa).

Residues histidine 552, histidine 556, cysteine 654, and histidine 658 each contribute to the Zn(2+) site.

It belongs to the class-II aminoacyl-tRNA synthetase family. Requires Zn(2+) as cofactor.

It is found in the cytoplasm. It carries out the reaction tRNA(Ala) + L-alanine + ATP = L-alanyl-tRNA(Ala) + AMP + diphosphate. Catalyzes the attachment of alanine to tRNA(Ala) in a two-step reaction: alanine is first activated by ATP to form Ala-AMP and then transferred to the acceptor end of tRNA(Ala). Also edits incorrectly charged Ser-tRNA(Ala) and Gly-tRNA(Ala) via its editing domain. This chain is Alanine--tRNA ligase, found in Nitrosomonas eutropha (strain DSM 101675 / C91 / Nm57).